The sequence spans 215 residues: Adenylate kinase (215 aa).

Glycine 10–threonine 15 is an ATP binding site. The NMP stretch occupies residues serine 30–valine 59. AMP contacts are provided by residues threonine 31, arginine 36, asparagine 57 to valine 59, glycine 85 to arginine 88, and glutamine 92. An LID region spans residues glycine 122–aspartate 159. ATP is bound by residues arginine 123 and isoleucine 132–tyrosine 133. AMP contacts are provided by arginine 156 and arginine 167. Glycine 201 is an ATP binding site.

Belongs to the adenylate kinase family. Monomer.

The protein resides in the cytoplasm. It carries out the reaction AMP + ATP = 2 ADP. It functions in the pathway purine metabolism; AMP biosynthesis via salvage pathway; AMP from ADP: step 1/1. In terms of biological role, catalyzes the reversible transfer of the terminal phosphate group between ATP and AMP. Plays an important role in cellular energy homeostasis and in adenine nucleotide metabolism. The polypeptide is Adenylate kinase (Pseudomonas syringae pv. tomato (strain ATCC BAA-871 / DC3000)).